The chain runs to 338 residues: Eukaryotic translation initiation factor 3 subunit H (338 aa).

The region spanning 22–154 is the MPN domain; the sequence is VQCDGLAVMK…LKAYRLTPQA (133 aa).

The protein belongs to the eIF-3 subunit H family. Component of the eukaryotic translation initiation factor 3 (eIF-3) complex. The eIF-3 complex interacts with pix. Interacts with mxt.

It localises to the cytoplasm. Its function is as follows. Component of the eukaryotic translation initiation factor 3 (eIF-3) complex, which is involved in protein synthesis of a specialized repertoire of mRNAs and, together with other initiation factors, stimulates binding of mRNA and methionyl-tRNAi to the 40S ribosome. The eIF-3 complex specifically targets and initiates translation of a subset of mRNAs involved in cell proliferation. This Drosophila sechellia (Fruit fly) protein is Eukaryotic translation initiation factor 3 subunit H.